A 159-amino-acid polypeptide reads, in one-letter code: Large ribosomal subunit protein mL50 (159 aa).

It belongs to the mitochondrion-specific ribosomal protein mL50 family. As to quaternary structure, component of the mitochondrial ribosome large subunit (39S) which comprises a 16S rRNA and about 50 distinct proteins.

The protein localises to the mitochondrion. The sequence is that of Large ribosomal subunit protein mL50 (MRPL50) from Bos taurus (Bovine).